A 161-amino-acid chain; its full sequence is N5-carboxyaminoimidazole ribonucleotide mutase (161 aa).

Serine 9, aspartate 12, and arginine 39 together coordinate substrate.

Belongs to the AIR carboxylase family. Class I subfamily.

It catalyses the reaction 5-carboxyamino-1-(5-phospho-D-ribosyl)imidazole + H(+) = 5-amino-1-(5-phospho-D-ribosyl)imidazole-4-carboxylate. Its pathway is purine metabolism; IMP biosynthesis via de novo pathway; 5-amino-1-(5-phospho-D-ribosyl)imidazole-4-carboxylate from 5-amino-1-(5-phospho-D-ribosyl)imidazole (N5-CAIR route): step 2/2. In terms of biological role, catalyzes the conversion of N5-carboxyaminoimidazole ribonucleotide (N5-CAIR) to 4-carboxy-5-aminoimidazole ribonucleotide (CAIR). This chain is N5-carboxyaminoimidazole ribonucleotide mutase, found in Vibrio cholerae serotype O1 (strain ATCC 39315 / El Tor Inaba N16961).